A 287-amino-acid polypeptide reads, in one-letter code: Glucose uptake protein GlcU (287 aa).

The next 8 helical transmembrane spans lie at 4 to 26 (LLAL…LGGG), 38 to 60 (ALIV…IFIV), 110 to 132 (WSTP…GIIL), 153 to 175 (ILIL…LFNV), 180 to 197 (ALLP…VLTY), 210 to 227 (ILPG…FISQ), 232 to 254 (VATS…IFIL), and 261 to 283 (RQLI…LGIA).

Belongs to the GRP transporter (TC 2.A.7.5) family.

It localises to the cell membrane. Functionally, involved in the uptake of glucose. The chain is Glucose uptake protein GlcU (glcU) from Bacillus subtilis (strain 168).